We begin with the raw amino-acid sequence, 842 residues long: Elongation factor 2 (842 aa).

In terms of domain architecture, tr-type G spans 17 to 253 (TNVRNMSVIA…LWGDSYFNPK (237 aa)). Residues 26 to 33 (AHVDHGKS), 158 to 161 (NKVD), and 213 to 215 (SGL) each bind GTP. A Diphthamide modification is found at histidine 699.

Belongs to the TRAFAC class translation factor GTPase superfamily. Classic translation factor GTPase family. EF-G/EF-2 subfamily.

Its subcellular location is the cytoplasm. The catalysed reaction is GTP + H2O = GDP + phosphate + H(+). Functionally, catalyzes the GTP-dependent ribosomal translocation step during translation elongation. During this step, the ribosome changes from the pre-translocational (PRE) to the post-translocational (POST) state as the newly formed A-site-bound peptidyl-tRNA and P-site-bound deacylated tRNA move to the P and E sites, respectively. Catalyzes the coordinated movement of the two tRNA molecules, the mRNA and conformational changes in the ribosome. The chain is Elongation factor 2 (EFT1) from Komagataella pastoris (Yeast).